We begin with the raw amino-acid sequence, 844 residues long: Striatin-interacting proteins 2 (844 aa).

Residues 1 to 18 (MDDPAAPGPAGSPANDNG) show a composition bias toward low complexity. A disordered region spans residues 1–58 (MDDPAAPGPAGSPANDNGNGNGNGNGNGNGGKGKPAVPKGRETFRNQRRESEGSVDCP). The span at 19–33 (NGNGNGNGNGNGGKG) shows a compositional bias: gly residues. Residues 39 to 52 (KGRETFRNQRRESE) show a composition bias toward basic and acidic residues. A phosphoserine mark is found at S328, S339, and S364. Residues 331–355 (SYTLDLGESQLAPPPSKLRGRRGSR) are disordered. Residues 370–422 (ERDLFKTEEPATEEEEESAADGERTLDGELDLLEQDPLVPPPPSQTPLSTDRV) are disordered. The span at 379–389 (PATEEEEESAA) shows a compositional bias: acidic residues.

The protein belongs to the STRIP family. As to quaternary structure, part of the core of STRIPAK complexes composed of PP2A catalytic and scaffolding subunits, the striatins (PP2A regulatory subunits), the striatin-associated proteins MOB4, STRIP1 and STRIP2, PDCD10 and members of the STE20 kinases, such as STK24 and STK26. Interacts with CTTNBP2NL.

Its subcellular location is the cytoplasm. Plays a role in the regulation of cell morphology and cytoskeletal organization. Required in the control of cell shape. Calmodulin-binding scaffolding protein which is the center of the striatin-interacting phosphatase and kinase (STRIPAK) complexes. STRIPAK complexes have critical roles in protein (de)phosphorylation and are regulators of multiple signaling pathways including Hippo, MAPK, nuclear receptor and cytoskeleton remodeling. Different types of STRIPAK complexes are involved in a variety of biological processes such as cell growth, differentiation, apoptosis, metabolism and immune regulation. The polypeptide is Striatin-interacting proteins 2 (Strip2) (Mus musculus (Mouse)).